The chain runs to 447 residues: Tubulin beta chain (447 aa).

Residues Gln11, Glu69, Ser138, Gly142, Thr143, Gly144, Asn204, and Asn226 each coordinate GTP. Glu69 provides a ligand contact to Mg(2+).

Belongs to the tubulin family. Dimer of alpha and beta chains. A typical microtubule is a hollow water-filled tube with an outer diameter of 25 nm and an inner diameter of 15 nM. Alpha-beta heterodimers associate head-to-tail to form protofilaments running lengthwise along the microtubule wall with the beta-tubulin subunit facing the microtubule plus end conferring a structural polarity. Microtubules usually have 13 protofilaments but different protofilament numbers can be found in some organisms and specialized cells. Mg(2+) is required as a cofactor.

It is found in the cytoplasm. It localises to the cytoskeleton. In terms of biological role, tubulin is the major constituent of microtubules, a cylinder consisting of laterally associated linear protofilaments composed of alpha- and beta-tubulin heterodimers. Microtubules grow by the addition of GTP-tubulin dimers to the microtubule end, where a stabilizing cap forms. Below the cap, tubulin dimers are in GDP-bound state, owing to GTPase activity of alpha-tubulin. The chain is Tubulin beta chain (TUB2) from Penicillium digitatum (Green mold).